A 1192-amino-acid chain; its full sequence is Probable phospholipid-transporting ATPase IM (1192 aa).

Over 1–44 (MFCSEKKLREVERIVKANDREYNEKFQYADNRIHTSKYNILTFL) the chain is Cytoplasmic. Residues 45 to 66 (PINLFEQFQRVANAYFLCLLIL) traverse the membrane as a helical segment. Over 67–72 (QLIPEI) the chain is Exoplasmic loop. The chain crosses the membrane as a helical span at residues 73 to 92 (SSLTWFTTIVPLVLVITMTA). Topologically, residues 93-276 (VKDATDDYFR…TSIDRLMNTL (184 aa)) are cytoplasmic. A helical membrane pass occupies residues 277-298 (VLWIFGFLICLGIILAIGNSIW). At 299–327 (ESQTGDQFRTFLFWNEGEKSSVFSGFLTF) the chain is on the exoplasmic loop side. A helical transmembrane segment spans residues 328–349 (WSYIIILNTVVPISLYVSVEVI). At 350 to 871 (RLGHSYFINW…GRWSYFRMCK (522 aa)) the chain is on the cytoplasmic side. Catalysis depends on aspartate 392, which acts as the 4-aspartylphosphate intermediate. ATP contacts are provided by aspartate 392, lysine 393, threonine 394, glutamate 496, phenylalanine 537, lysine 560, arginine 594, threonine 674, glycine 675, aspartate 676, arginine 789, and lysine 795. Position 392 (aspartate 392) interacts with Mg(2+). Threonine 394 contributes to the Mg(2+) binding site. Residue aspartate 815 coordinates Mg(2+). ATP is bound by residues asparagine 818 and aspartate 819. Mg(2+) is bound at residue aspartate 819. A helical transmembrane segment spans residues 872-892 (FLCYFFYKNFAFTLVHFWFGF). The Exoplasmic loop portion of the chain corresponds to 893 to 904 (FCGFSAQTVYDQ). A helical transmembrane segment spans residues 905–924 (WFITLFNIVYTSLPVLAMGI). At 925–954 (FDQDVSDQNSVDCPQLYKPGQLNLLFNKRK) the chain is on the cytoplasmic side. A helical transmembrane segment spans residues 955–976 (FFICVLHGIYTSLVLFFIPYGA). Residues 977 to 990 (FYNVAGEDGQHIAD) lie on the Exoplasmic loop side of the membrane. Residues 991-1013 (YQSFAVTMATSLVIVVSVQIALD) form a helical membrane-spanning segment. Over 1014-1019 (TSYWTF) the chain is Cytoplasmic. A helical transmembrane segment spans residues 1020–1040 (INHVFIWGSIAIYFSILFTMH). The Exoplasmic loop segment spans residues 1041–1060 (SNGIFGIFPNQFPFVGNARH). Residues 1061-1085 (SLTQKCIWLVILLTTVASVMPVVAF) traverse the membrane as a helical segment. Over 1086 to 1192 (RFLKVDLYPT…SFSQDKTVKL (107 aa)) the chain is Cytoplasmic. The span at 1104-1125 (QKAQKKARPPSSRRPRTRRSSS) shows a compositional bias: basic residues. Disordered stretches follow at residues 1104 to 1130 (QKAQ…RSGY) and 1143 to 1163 (TSGK…EKTH).

Belongs to the cation transport ATPase (P-type) (TC 3.A.3) family. Type IV subfamily. Component of a P4-ATPase flippase complex which consists of a catalytic alpha subunit and an accessory beta subunit. Interacts with beta subunits TMEM30A and TMEM30B. It depends on Mg(2+) as a cofactor. As to expression, ubiquitously expressed at moderate levels.

The protein resides in the cell membrane. The protein localises to the golgi apparatus. It carries out the reaction ATP + H2O + phospholipidSide 1 = ADP + phosphate + phospholipidSide 2.. Component of a P4-ATPase flippase complex which catalyzes the hydrolysis of ATP coupled to the transport of aminophospholipids from the outer to the inner leaflet of various membranes and ensures the maintenance of asymmetric distribution of phospholipids. Phospholipid translocation also seems to be implicated in vesicle formation and in uptake of lipid signaling molecules. This Homo sapiens (Human) protein is Probable phospholipid-transporting ATPase IM (ATP8B4).